Consider the following 60-residue polypeptide: Large ribosomal subunit protein bL32 (60 aa).

Basic residues predominate over residues 1–19 (MAVPKRRTSKRRKRARNTH). A disordered region spans residues 1–20 (MAVPKRRTSKRRKRARNTHK).

This sequence belongs to the bacterial ribosomal protein bL32 family.

In Gemmatimonas aurantiaca (strain DSM 14586 / JCM 11422 / NBRC 100505 / T-27), this protein is Large ribosomal subunit protein bL32.